The following is a 494-amino-acid chain: Probable malate:quinone oxidoreductase 3 (494 aa).

The protein belongs to the MQO family. FAD is required as a cofactor.

It carries out the reaction (S)-malate + a quinone = a quinol + oxaloacetate. It functions in the pathway carbohydrate metabolism; tricarboxylic acid cycle; oxaloacetate from (S)-malate (quinone route): step 1/1. This chain is Probable malate:quinone oxidoreductase 3, found in Staphylococcus epidermidis (strain ATCC 35984 / DSM 28319 / BCRC 17069 / CCUG 31568 / BM 3577 / RP62A).